The chain runs to 626 residues: (R)-linalool synthase 2, chloroplastic (626 aa).

The N-terminal 21 residues, 1–21, are a transit peptide targeting the chloroplast; that stretch reads MAFVSIAPLASRCCVHKSFVS. Residues aspartate 377, aspartate 381, and glutamate 529 each coordinate Mg(2+). The DDXXD motif signature appears at 377–381; it reads DDIYD.

It belongs to the terpene synthase family. Tpsd subfamily. Requires Mg(2+) as cofactor. Mn(2+) serves as cofactor.

It is found in the plastid. The protein resides in the chloroplast. The catalysed reaction is (2E)-geranyl diphosphate + H2O = (R)-linalool + diphosphate. It functions in the pathway terpene metabolism; oleoresin biosynthesis. Functionally, terpene synthase (mono-TPS) involved in the biosynthesis of monoterpene natural products included in conifer oleoresin secretions and volatile emissions; these compounds contribute to biotic and abiotic stress defense against herbivores and pathogens. Catalyzes the conversion of (2E)-geranyl diphosphate (GPP) to (R)-linalool. The sequence is that of (R)-linalool synthase 2, chloroplastic from Picea sitchensis (Sitka spruce).